A 95-amino-acid chain; its full sequence is Aspartyl/glutamyl-tRNA(Asn/Gln) amidotransferase subunit C (95 aa).

It belongs to the GatC family. Heterotrimer of A, B and C subunits.

The catalysed reaction is L-glutamyl-tRNA(Gln) + L-glutamine + ATP + H2O = L-glutaminyl-tRNA(Gln) + L-glutamate + ADP + phosphate + H(+). It catalyses the reaction L-aspartyl-tRNA(Asn) + L-glutamine + ATP + H2O = L-asparaginyl-tRNA(Asn) + L-glutamate + ADP + phosphate + 2 H(+). Functionally, allows the formation of correctly charged Asn-tRNA(Asn) or Gln-tRNA(Gln) through the transamidation of misacylated Asp-tRNA(Asn) or Glu-tRNA(Gln) in organisms which lack either or both of asparaginyl-tRNA or glutaminyl-tRNA synthetases. The reaction takes place in the presence of glutamine and ATP through an activated phospho-Asp-tRNA(Asn) or phospho-Glu-tRNA(Gln). The protein is Aspartyl/glutamyl-tRNA(Asn/Gln) amidotransferase subunit C of Rhodopseudomonas palustris (strain TIE-1).